Reading from the N-terminus, the 499-residue chain is Inosine-5'-monophosphate dehydrogenase (499 aa).

CBS domains follow at residues 106–165 and 169–225; these read IDRE…SDAV and MTDE…GSAA. NAD(+)-binding positions include Asp-260 and 308-310; that span reads GIG. Residues Gly-310 and Gly-312 each coordinate K(+). IMP is bound at residue Ser-313. Residue Cys-315 participates in K(+) binding. Cys-315 (thioimidate intermediate) is an active-site residue. IMP contacts are provided by residues 348-350, 371-372, and 395-399; these read DGG, GS, and YRGMG. Residue Arg-411 is the Proton acceptor of the active site. Glu-425 lines the IMP pocket. K(+)-binding residues include Glu-479, Gly-480, and His-481. Residues 480–499 are disordered; that stretch reads GHPHDVMITDEAPNYSPQGE.

Belongs to the IMPDH/GMPR family. In terms of assembly, homotetramer. K(+) serves as cofactor.

The catalysed reaction is IMP + NAD(+) + H2O = XMP + NADH + H(+). It participates in purine metabolism; XMP biosynthesis via de novo pathway; XMP from IMP: step 1/1. Mycophenolic acid (MPA) is a non-competitive inhibitor that prevents formation of the closed enzyme conformation by binding to the same site as the amobile flap. In contrast, mizoribine monophosphate (MZP) is a competitive inhibitor that induces the closed conformation. MPA is a potent inhibitor of mammalian IMPDHs but a poor inhibitor of the bacterial enzymes. MZP is a more potent inhibitor of bacterial IMPDH. Functionally, catalyzes the conversion of inosine 5'-phosphate (IMP) to xanthosine 5'-phosphate (XMP), the first committed and rate-limiting step in the de novo synthesis of guanine nucleotides, and therefore plays an important role in the regulation of cell growth. In Halobacterium salinarum (strain ATCC 700922 / JCM 11081 / NRC-1) (Halobacterium halobium), this protein is Inosine-5'-monophosphate dehydrogenase.